The chain runs to 625 residues: Chaperone protein DnaK (625 aa).

A Phosphothreonine; by autocatalysis modification is found at Thr197. The interval 598–625 (MYKKDDNASGEQSGGKKKDDDVIDAEVE) is disordered.

The protein belongs to the heat shock protein 70 family.

Its function is as follows. Acts as a chaperone. The chain is Chaperone protein DnaK from Campylobacter curvus (strain 525.92).